A 278-amino-acid polypeptide reads, in one-letter code: MNKKPLEQIKNVTNVTGYRQVSLWKREDLQHPQPDELAEEVPVALVYNGISHVVMMASPKDLEQFAVGFSLSEGIIEHRREIFGMDVVAVCNGLEVQIELSSRRFMGLKARRRALAGRTGCGVCGVEQLNDIGKPVQPLPFTQSFDLANLDQALAHLNDFQPVGRLTGCTHAAAWVRLTGELAGGFEDVGRHVALDKLLGRRAEVGEGWQHGAALVSSRASYEMVQKAAMCGVEILFAVSAATTLAVEVAERCNLTLVGFCKPGRATVYTHPQRLIAG.

Catalysis depends on cysteine 121, which acts as the Cysteine persulfide intermediate. A Mo-bis(molybdopterin guanine dinucleotide)-binding site is contributed by 260–265; the sequence is FCKPGR.

The protein belongs to the FdhD family.

The protein resides in the cytoplasm. Functionally, required for formate dehydrogenase (FDH) activity. Acts as a sulfur carrier protein that transfers sulfur from IscS to the molybdenum cofactor prior to its insertion into FDH. This chain is Sulfur carrier protein FdhD, found in Klebsiella pneumoniae subsp. pneumoniae (strain ATCC 700721 / MGH 78578).